Consider the following 349-residue polypeptide: UPF0324 inner membrane protein YeiH (349 aa).

At 1-12 the chain is on the periplasmic side; sequence MTNITLQKQHRT. A helical membrane pass occupies residues 13-32; sequence LWHFIPGLALSAVITGVALW. The Cytoplasmic portion of the chain corresponds to 33-35; that stretch reads GGS. Residues 36–58 traverse the membrane as a helical segment; the sequence is IPAVAGAGFSALTLAILLGMVLG. Residues 59–99 lie on the Periplasmic side of the membrane; it reads NTIYPHIWKSCDGGVLFAKQYLLRLGIILYGFRLTFSQIAD. A helical transmembrane segment spans residues 100-122; the sequence is VGISGIIIDVLTLSSTFLLACFL. Residues 123–131 are Cytoplasmic-facing; sequence GQKVFGLDK. Residues 132–151 traverse the membrane as a helical segment; it reads HTSWLIGAGSSICGAAAVLA. The Periplasmic segment spans residues 152-162; sequence TEPVVKAEASK. A helical membrane pass occupies residues 163–185; sequence VTVAVATVVIFGTVAIFLYPAIY. Topologically, residues 186–261 are cytoplasmic; it reads PLMSQWFSPE…SGTNSGEKSK (76 aa). The chain crosses the membrane as a helical span at residues 262–283; sequence ITIPWFAILFIVVAIFNSFHLL. Over 284–289 the chain is Periplasmic; the sequence is PQSVVN. A helical membrane pass occupies residues 290-312; the sequence is MLVTLDTFLLAMAMAALGLTTHV. Over 313–321 the chain is Cytoplasmic; that stretch reads SALKKAGAK. Residues 322–344 traverse the membrane as a helical segment; the sequence is PLLMALVLFAWLIVGGGAINYVI. At 345 to 349 the chain is on the periplasmic side; the sequence is QSVIA.

This sequence belongs to the UPF0324 family.

It is found in the cell inner membrane. The polypeptide is UPF0324 inner membrane protein YeiH (yeiH) (Escherichia coli O6:H1 (strain CFT073 / ATCC 700928 / UPEC)).